We begin with the raw amino-acid sequence, 233 residues long: Protein-methionine-sulfoxide reductase heme-binding subunit MsrQ (233 aa).

Helical transmembrane passes span 13–33, 44–64, 81–101, 117–137, 151–171, and 174–194; these read IKAALFLLTLLPALHYAHGLW, ALTRGMGIWTLNFLFLTLCVS, MLGLTAFAYGCLHLLTYLWLD, PFITVGATAFLLMLPLALTSS, SLHRAVYAVAILGVVHYLWLV, and VALLDPIIYALVLAILLGWRV. The Ferric oxidoreductase domain maps to 50–164; the sequence is GIWTLNFLFL…AVYAVAILGV (115 aa).

It belongs to the MsrQ family. Heterodimer of a catalytic subunit (MsrP) and a heme-binding subunit (MsrQ).

The protein resides in the cell inner membrane. Its function is as follows. Part of the MsrPQ system that repairs oxidized periplasmic proteins containing methionine sulfoxide residues (Met-O), using respiratory chain electrons. Thus protects these proteins from oxidative-stress damage caused by reactive species of oxygen and chlorine generated by the host defense mechanisms. MsrPQ is essential for the maintenance of envelope integrity under bleach stress, rescuing a wide series of structurally unrelated periplasmic proteins from methionine oxidation. MsrQ provides electrons for reduction to the reductase catalytic subunit MsrP, using the quinone pool of the respiratory chain. Probably involved in protection against reactive chlorine species (RCS) generated by chlorite and hypochlorite. This chain is Protein-methionine-sulfoxide reductase heme-binding subunit MsrQ, found in Azospira oryzae (strain ATCC BAA-33 / DSM 13638 / PS) (Dechlorosoma suillum).